Consider the following 438-residue polypeptide: Tol-Pal system protein TolB (438 aa).

The signal sequence occupies residues 1–21 (MVKRSLLVLALLICLPATLFA).

Belongs to the TolB family. As to quaternary structure, the Tol-Pal system is composed of five core proteins: the inner membrane proteins TolA, TolQ and TolR, the periplasmic protein TolB and the outer membrane protein Pal. They form a network linking the inner and outer membranes and the peptidoglycan layer.

Its subcellular location is the periplasm. Its function is as follows. Part of the Tol-Pal system, which plays a role in outer membrane invagination during cell division and is important for maintaining outer membrane integrity. The polypeptide is Tol-Pal system protein TolB (Desulfosudis oleivorans (strain DSM 6200 / JCM 39069 / Hxd3) (Desulfococcus oleovorans)).